A 108-amino-acid polypeptide reads, in one-letter code: Ig kappa chain V-VI region NQ2-6.1 (108 aa).

Positions 1 to 23 (QILLTQSPAIMSASPGQKVTMTC) are framework-1. Cysteine 23 and cysteine 87 form a disulfide bridge. The segment at 24 to 33 (SASSSVSYMY) is complementarity-determining-1. Positions 34–48 (WYQQKPGSSPRLLIY) are framework-2. Residues 49–55 (DTSNLAS) are complementarity-determining-2. The segment at 56 to 87 (GVPVRFSGSGSATSYSLTITRMQAEDAATYYC) is framework-3. The segment at 88 to 98 (QQWSSYPPMLT) is complementarity-determining-3. The framework-4 stretch occupies residues 99-108 (FGAGTKLELK).

The chain is Ig kappa chain V-VI region NQ2-6.1 from Mus musculus (Mouse).